The chain runs to 519 residues: Histidine ammonia-lyase (519 aa).

Residues 146–148 (ASG) constitute a cross-link (5-imidazolinone (Ala-Gly)). Position 147 is a 2,3-didehydroalanine (Ser) (Ser-147).

This sequence belongs to the PAL/histidase family. Contains an active site 4-methylidene-imidazol-5-one (MIO), which is formed autocatalytically by cyclization and dehydration of residues Ala-Ser-Gly.

It localises to the cytoplasm. It catalyses the reaction L-histidine = trans-urocanate + NH4(+). The protein operates within amino-acid degradation; L-histidine degradation into L-glutamate; N-formimidoyl-L-glutamate from L-histidine: step 1/3. In Bradyrhizobium diazoefficiens (strain JCM 10833 / BCRC 13528 / IAM 13628 / NBRC 14792 / USDA 110), this protein is Histidine ammonia-lyase.